Consider the following 211-residue polypeptide: Probable chemoreceptor glutamine deamidase CheD (211 aa).

The protein belongs to the CheD family.

It catalyses the reaction L-glutaminyl-[protein] + H2O = L-glutamyl-[protein] + NH4(+). Probably deamidates glutamine residues to glutamate on methyl-accepting chemotaxis receptors (MCPs), playing an important role in chemotaxis. This is Probable chemoreceptor glutamine deamidase CheD from Hahella chejuensis (strain KCTC 2396).